We begin with the raw amino-acid sequence, 121 residues long: General odorant-binding protein 72 (121 aa).

Disulfide bonds link C45/C101 and C90/C110.

It belongs to the PBP/GOBP family.

It localises to the secreted. Functionally, present in the aqueous fluid surrounding olfactory sensory dendrites and are thought to aid in the capture and transport of hydrophobic odorants into and through this fluid. The polypeptide is General odorant-binding protein 72 (Obp72) (Anopheles gambiae (African malaria mosquito)).